The following is a 401-amino-acid chain: Protein-glutamate methylesterase/protein-glutamine glutaminase (401 aa).

The 119-residue stretch at 16–134 (RVLVIDDSAV…LAGAEEFRRD (119 aa)) folds into the Response regulatory domain. A 4-aspartylphosphate modification is found at D67. Residues 146-208 (PIPPVPTQRD…PQGRGTPRNT (63 aa)) are disordered. 2 stretches are compositionally biased toward low complexity: residues 166-176 (AAPGAPVARSI) and 185-199 (SAPA…AQPP). The CheB-type methylesterase domain occupies 205–400 (PRNTARPEII…PGIVRRAKGG (196 aa)). Catalysis depends on residues S219, H246, and D342.

Belongs to the CheB family. Post-translationally, phosphorylated by CheA. Phosphorylation of the N-terminal regulatory domain activates the methylesterase activity.

It localises to the cytoplasm. The enzyme catalyses [protein]-L-glutamate 5-O-methyl ester + H2O = L-glutamyl-[protein] + methanol + H(+). It carries out the reaction L-glutaminyl-[protein] + H2O = L-glutamyl-[protein] + NH4(+). Its function is as follows. Involved in chemotaxis. Part of a chemotaxis signal transduction system that modulates chemotaxis in response to various stimuli. Catalyzes the demethylation of specific methylglutamate residues introduced into the chemoreceptors (methyl-accepting chemotaxis proteins or MCP) by CheR. Also mediates the irreversible deamidation of specific glutamine residues to glutamic acid. The protein is Protein-glutamate methylesterase/protein-glutamine glutaminase of Maricaulis maris (strain MCS10) (Caulobacter maris).